The primary structure comprises 553 residues: Dihydroxy-acid dehydratase (553 aa).

Residue aspartate 78 coordinates Mg(2+). Position 119 (cysteine 119) interacts with [2Fe-2S] cluster. The Mg(2+) site is built by aspartate 120 and lysine 121. Residue lysine 121 is modified to N6-carboxylysine. [2Fe-2S] cluster is bound at residue cysteine 193. Glutamate 441 contacts Mg(2+). The active-site Proton acceptor is the serine 467.

The protein belongs to the IlvD/Edd family. In terms of assembly, homodimer. Requires [2Fe-2S] cluster as cofactor. Mg(2+) serves as cofactor.

The enzyme catalyses (2R)-2,3-dihydroxy-3-methylbutanoate = 3-methyl-2-oxobutanoate + H2O. It catalyses the reaction (2R,3R)-2,3-dihydroxy-3-methylpentanoate = (S)-3-methyl-2-oxopentanoate + H2O. It participates in amino-acid biosynthesis; L-isoleucine biosynthesis; L-isoleucine from 2-oxobutanoate: step 3/4. Its pathway is amino-acid biosynthesis; L-valine biosynthesis; L-valine from pyruvate: step 3/4. Functionally, functions in the biosynthesis of branched-chain amino acids. Catalyzes the dehydration of (2R,3R)-2,3-dihydroxy-3-methylpentanoate (2,3-dihydroxy-3-methylvalerate) into 2-oxo-3-methylpentanoate (2-oxo-3-methylvalerate) and of (2R)-2,3-dihydroxy-3-methylbutanoate (2,3-dihydroxyisovalerate) into 2-oxo-3-methylbutanoate (2-oxoisovalerate), the penultimate precursor to L-isoleucine and L-valine, respectively. The polypeptide is Dihydroxy-acid dehydratase (Geotalea daltonii (strain DSM 22248 / JCM 15807 / FRC-32) (Geobacter daltonii)).